A 137-amino-acid polypeptide reads, in one-letter code: 3-hydroxyacyl-[acyl-carrier-protein] dehydratase FabZ (137 aa).

Residue histidine 46 is part of the active site.

The protein belongs to the thioester dehydratase family. FabZ subfamily.

The protein resides in the cytoplasm. It catalyses the reaction a (3R)-hydroxyacyl-[ACP] = a (2E)-enoyl-[ACP] + H2O. Functionally, involved in unsaturated fatty acids biosynthesis. Catalyzes the dehydration of short chain beta-hydroxyacyl-ACPs and long chain saturated and unsaturated beta-hydroxyacyl-ACPs. The sequence is that of 3-hydroxyacyl-[acyl-carrier-protein] dehydratase FabZ from Thermotoga neapolitana (strain ATCC 49049 / DSM 4359 / NBRC 107923 / NS-E).